The primary structure comprises 256 residues: 5'-nucleotidase SurE (256 aa).

A divalent metal cation contacts are provided by Asp-8, Asp-9, Ser-40, and Asn-92.

It belongs to the SurE nucleotidase family. It depends on a divalent metal cation as a cofactor.

Its subcellular location is the cytoplasm. It carries out the reaction a ribonucleoside 5'-phosphate + H2O = a ribonucleoside + phosphate. Functionally, nucleotidase that shows phosphatase activity on nucleoside 5'-monophosphates. In Allorhizobium ampelinum (strain ATCC BAA-846 / DSM 112012 / S4) (Agrobacterium vitis (strain S4)), this protein is 5'-nucleotidase SurE.